Here is a 284-residue protein sequence, read N- to C-terminus: 4-diphosphocytidyl-2-C-methyl-D-erythritol kinase (284 aa).

Residue Lys14 is part of the active site. An ATP-binding site is contributed by 98 to 108 (PMGGGLGGGSS). Residue Asp140 is part of the active site.

Belongs to the GHMP kinase family. IspE subfamily.

The enzyme catalyses 4-CDP-2-C-methyl-D-erythritol + ATP = 4-CDP-2-C-methyl-D-erythritol 2-phosphate + ADP + H(+). The protein operates within isoprenoid biosynthesis; isopentenyl diphosphate biosynthesis via DXP pathway; isopentenyl diphosphate from 1-deoxy-D-xylulose 5-phosphate: step 3/6. Functionally, catalyzes the phosphorylation of the position 2 hydroxy group of 4-diphosphocytidyl-2C-methyl-D-erythritol. This Shewanella halifaxensis (strain HAW-EB4) protein is 4-diphosphocytidyl-2-C-methyl-D-erythritol kinase.